Consider the following 27-residue polypeptide: Superoxide dismutase [Mn] (27 aa).

Belongs to the iron/manganese superoxide dismutase family. As to quaternary structure, homodimer. It depends on Mn(2+) as a cofactor.

The enzyme catalyses 2 superoxide + 2 H(+) = H2O2 + O2. Its function is as follows. Destroys superoxide anion radicals which are normally produced within the cells and which are toxic to biological systems. The polypeptide is Superoxide dismutase [Mn] (sodA) (Desulfovibrio desulfuricans).